Consider the following 427-residue polypeptide: 5-hydroxybenzimidazole synthase BzaA (427 aa).

The protein belongs to the ThiC family. 5-hydroxybenzimidazole synthase subfamily. It depends on [4Fe-4S] cluster as a cofactor.

It carries out the reaction 5-amino-1-(5-phospho-beta-D-ribosyl)imidazole + AH2 + S-adenosyl-L-methionine = 5-hydroxybenzimidazole + 5'-deoxyadenosine + formate + L-methionine + A + NH4(+) + phosphate + 2 H(+). It functions in the pathway cofactor biosynthesis; adenosylcobalamin biosynthesis. Functionally, together with BzaB, catalyzes the conversion of aminoimidazole ribotide (AIR) to 5-hydroxybenzimidazole (5-HBI) in a radical S-adenosyl-L-methionine (SAM)-dependent reaction. Is thus involved in the anaerobic biosynthesis of dimethylbenzimidazole (DMB), the lower axial ligand of vitamin B12 (cobalamin). Requires BzaB for catalytic activity, as BzaA alone displays no activity. This is 5-hydroxybenzimidazole synthase BzaA from Eubacterium limosum.